The sequence spans 268 residues: Glucosamine-6-phosphate deaminase (268 aa).

The active-site Proton acceptor; for enolization step is the aspartate 72. Aspartate 141 acts as the For ring-opening step in catalysis. Histidine 143 acts as the Proton acceptor; for ring-opening step in catalysis. Glutamate 148 serves as the catalytic For ring-opening step.

The protein belongs to the glucosamine/galactosamine-6-phosphate isomerase family. NagB subfamily. In terms of assembly, homohexamer.

The catalysed reaction is alpha-D-glucosamine 6-phosphate + H2O = beta-D-fructose 6-phosphate + NH4(+). It functions in the pathway amino-sugar metabolism; N-acetylneuraminate degradation; D-fructose 6-phosphate from N-acetylneuraminate: step 5/5. With respect to regulation, allosterically activated by N-acetylglucosamine 6-phosphate (GlcNAc6P). Functionally, catalyzes the reversible isomerization-deamination of glucosamine 6-phosphate (GlcN6P) to form fructose 6-phosphate (Fru6P) and ammonium ion. The protein is Glucosamine-6-phosphate deaminase of Proteus mirabilis (strain HI4320).